The primary structure comprises 360 residues: Peptide chain release factor 1 (360 aa).

Gln-235 carries the post-translational modification N5-methylglutamine.

It belongs to the prokaryotic/mitochondrial release factor family. Post-translationally, methylated by PrmC. Methylation increases the termination efficiency of RF1.

It localises to the cytoplasm. Functionally, peptide chain release factor 1 directs the termination of translation in response to the peptide chain termination codons UAG and UAA. In Methylobacillus flagellatus (strain ATCC 51484 / DSM 6875 / VKM B-1610 / KT), this protein is Peptide chain release factor 1.